Here is a 129-residue protein sequence, read N- to C-terminus: Small ribosomal subunit protein uS11 (129 aa).

Belongs to the universal ribosomal protein uS11 family. As to quaternary structure, part of the 30S ribosomal subunit. Interacts with proteins S7 and S18. Binds to IF-3.

Functionally, located on the platform of the 30S subunit, it bridges several disparate RNA helices of the 16S rRNA. Forms part of the Shine-Dalgarno cleft in the 70S ribosome. This is Small ribosomal subunit protein uS11 from Vibrio campbellii (strain ATCC BAA-1116).